Here is a 258-residue protein sequence, read N- to C-terminus: Phosphate import ATP-binding protein PstB (258 aa).

Residues 5 to 247 (IETKDLDIYY…ERIFSNPKEK (243 aa)) enclose the ABC transporter domain. Residue 37 to 44 (GPSGCGKS) coordinates ATP.

It belongs to the ABC transporter superfamily. Phosphate importer (TC 3.A.1.7) family. In terms of assembly, the complex is composed of two ATP-binding proteins (PstB), two transmembrane proteins (PstC and PstA) and a solute-binding protein (PstS).

The protein resides in the cell membrane. The enzyme catalyses phosphate(out) + ATP + H2O = ADP + 2 phosphate(in) + H(+). Part of the ABC transporter complex PstSACB involved in phosphate import. Responsible for energy coupling to the transport system. The polypeptide is Phosphate import ATP-binding protein PstB (Cutibacterium acnes (strain DSM 16379 / KPA171202) (Propionibacterium acnes)).